We begin with the raw amino-acid sequence, 431 residues long: Large envelope protein (431 aa).

A lipid anchor (N-myristoyl glycine; by host) is attached at Gly-2. Positions 2–148 (GNNIKVTFNP…PPLRDTHPHL (147 aa)) are pre-S1. The segment at 2–207 (GNNIKVTFNP…PSTTGDPALS (206 aa)) is pre-S. Residues 2-214 (GNNIKVTFNP…ALSPEMSPSS (213 aa)) lie on the Virion surface; in external conformation side of the membrane. Topologically, residues 2-286 (GNNIKVTFNP…NGFRWMYLRR (285 aa)) are intravirion; in internal conformation. The N-linked (GlcNAc...) asparagine glycan is linked to Asn-3. The segment at 115 to 146 (IPRGLVPPQTPTNRDQGRKPTPPTPPLRDTHP) is disordered. The segment at 149–207 (TMKNQTFRLQGFVDGLRDLTTTERYHNAYGDPFTTLSPVVPTVSTILSPPSTTGDPALS) is pre-S2. The helical transmembrane segment at 215–235 (LLGLLAGLQVVYFLWTKILTI) threads the bilayer. The Intravirion; in external conformation segment spans residues 236 to 286 (AQNLDWWWTSLSFPGGIPECTGQNSQFQTCKHLPTSCPPTCNGFRWMYLRR). The helical transmembrane segment at 287–307 (FIIYLLVLLLCLIFLLVLLDW) threads the bilayer. Over 308 to 379 (KGLIPVCPLQ…WALARFSWLN (72 aa)) the chain is Virion surface. Residue Asn-351 is glycosylated (N-linked (GlcNAc...) asparagine; by host). A helical membrane pass occupies residues 380–400 (LLVPLLQWLGGISLIAWFLLI). Residues 401–406 (WMIWFW) are Intravirion-facing. A helical transmembrane segment spans residues 407-429 (GPALLSILPPFIPIFVLFFLIWV). Residues 430 to 431 (YI) lie on the Virion surface side of the membrane.

Belongs to the orthohepadnavirus major surface antigen family. In terms of assembly, in its internal form (Li-HBsAg), interacts with the capsid protein and with the isoform S. Interacts with host chaperone CANX. Associates with host chaperone CANX through its pre-S2 N glycan; this association may be essential for isoform M proper secretion. As to quaternary structure, interacts with isoform L. Interacts with the antigens of satellite virus HDV (HDVAgs); this interaction is required for encapsidation of HDV genomic RNA. Post-translationally, isoform M is N-terminally acetylated by host at a ratio of 90%, and N-glycosylated by host at the pre-S2 region. In terms of processing, myristoylated.

It is found in the virion membrane. Functionally, the large envelope protein exists in two topological conformations, one which is termed 'external' or Le-HBsAg and the other 'internal' or Li-HBsAg. In its external conformation the protein attaches the virus to cell receptors and thereby initiating infection. This interaction determines the species specificity and liver tropism. This attachment induces virion internalization predominantly through caveolin-mediated endocytosis. The large envelope protein also assures fusion between virion membrane and endosomal membrane. In its internal conformation the protein plays a role in virion morphogenesis and mediates the contact with the nucleocapsid like a matrix protein. Its function is as follows. The middle envelope protein plays an important role in the budding of the virion. It is involved in the induction of budding in a nucleocapsid independent way. In this process the majority of envelope proteins bud to form subviral lipoprotein particles of 22 nm of diameter that do not contain a nucleocapsid. The polypeptide is Large envelope protein (Woodchuck hepatitis B virus (isolate 59) (WHV)).